Reading from the N-terminus, the 332-residue chain is Glycerol-3-phosphate dehydrogenase [NAD(P)+] (332 aa).

The NADPH site is built by serine 11, tryptophan 12, arginine 32, arginine 33, and lysine 106. 2 residues coordinate sn-glycerol 3-phosphate: lysine 106 and glycine 136. Residue alanine 140 participates in NADPH binding. Lysine 191, aspartate 244, serine 254, arginine 255, and asparagine 256 together coordinate sn-glycerol 3-phosphate. Lysine 191 acts as the Proton acceptor in catalysis. Residue arginine 255 participates in NADPH binding. NADPH is bound by residues valine 280 and glutamate 282.

It belongs to the NAD-dependent glycerol-3-phosphate dehydrogenase family.

It localises to the cytoplasm. The catalysed reaction is sn-glycerol 3-phosphate + NAD(+) = dihydroxyacetone phosphate + NADH + H(+). It carries out the reaction sn-glycerol 3-phosphate + NADP(+) = dihydroxyacetone phosphate + NADPH + H(+). It functions in the pathway membrane lipid metabolism; glycerophospholipid metabolism. Catalyzes the reduction of the glycolytic intermediate dihydroxyacetone phosphate (DHAP) to sn-glycerol 3-phosphate (G3P), the key precursor for phospholipid synthesis. This Corynebacterium urealyticum (strain ATCC 43042 / DSM 7109) protein is Glycerol-3-phosphate dehydrogenase [NAD(P)+].